The following is a 481-amino-acid chain: Long chain base biosynthesis protein 1b (481 aa).

A helical transmembrane segment spans residues 32–52; it reads FGIHIDGHLVVEGLLIAAILF.

Belongs to the class-II pyridoxal-phosphate-dependent aminotransferase family. In terms of assembly, heterodimer with LCB2. Component of the serine palmitoyltransferase (SPT) complex, composed of LCB1 and LCB2. Pyridoxal 5'-phosphate is required as a cofactor.

It localises to the endoplasmic reticulum membrane. The catalysed reaction is L-serine + hexadecanoyl-CoA + H(+) = 3-oxosphinganine + CO2 + CoA. It functions in the pathway lipid metabolism; sphingolipid metabolism. Its function is as follows. Serine palmitoyltransferase (SPT). The heterodimer formed with LCB2 constitutes the catalytic core. This is Long chain base biosynthesis protein 1b from Oryza sativa subsp. japonica (Rice).